The sequence spans 692 residues: Elongation factor G (692 aa).

Positions 8–283 (NRIRNIGIAA…AVIDYLPAPT (276 aa)) constitute a tr-type G domain. GTP contacts are provided by residues 17–24 (AHIDAGKT), 81–85 (DTPGH), and 135–138 (NKMD).

The protein belongs to the TRAFAC class translation factor GTPase superfamily. Classic translation factor GTPase family. EF-G/EF-2 subfamily.

The protein resides in the cytoplasm. Its function is as follows. Catalyzes the GTP-dependent ribosomal translocation step during translation elongation. During this step, the ribosome changes from the pre-translocational (PRE) to the post-translocational (POST) state as the newly formed A-site-bound peptidyl-tRNA and P-site-bound deacylated tRNA move to the P and E sites, respectively. Catalyzes the coordinated movement of the two tRNA molecules, the mRNA and conformational changes in the ribosome. The sequence is that of Elongation factor G from Helicobacter pylori (strain G27).